Here is an 851-residue protein sequence, read N- to C-terminus: MQSNRRDFLKAQALAASAAAAGIPIVVEAANGTAAPKTAADVAVRWDKAPCRFCGTGCAVMVGVQEGKVVATQGDPEAPVNRGLNCIKGYFLSKIMYGRDRLQTPLLRKKNGVYDKEGDFVPVSWDEAFDIMAAKWKETLKTDGPTGIGMFGSGQWTVWEGYAAAKLWKAGFRSNNLDPNARHCMASAVTGFMRTFGIDEPMGCYDDIEQSDAFVLWGSNMAEMHPILWSRITDRRLSNPHVKVAVLSTYEHRSFDLADQAMIFKPQTDLAILNYIANYIITNKKVNTEFVKKNINFKKGATDIGYGLRPGHALEKDATSNGYPGADGKPKGNPNDSTPISFDEYAKFVSEYTAEKVSEISGVTVEQLKALAELYADPKVKVVSYWTMGFNQHTRGTWANNMVYNIHLLTGKISQPGNGPFSLTGQPSACGTAREVGTFAHRLPADMVVTNPEHRHHAEEIWGLPEGTIPDKIGLHAVAQSRALKDGKLKCYWVTTNNNMQAGPNINGEILPGWRNPKTFIVVSDPYPTASAMAADLVLPAAMWVEKEGAFGNAERRTQVWRQQVSAPGEARSDLWQMMEFSKRFKIEDVWTAELIAKKPAVKGKTLFDVLFRNGKVDKYPLADLTKVNAKYIKDYTNDESKAYGFYVQKGLFEEYAEFGRGHGHDLAPFDVYHEVRGLRWPVVDGKETLWRFREGYDPYVKKGEGVKFYGHKDGRANIFALPYQPAAESPDKEYDLWLCTGRVLEHWHTGTMTRRVPELHRAVPEAQLFMHPDDAKARGLQRGMKVKIASRRGEILLAVETKGRNKVPRGLVFVPFFDEGKLINKLTLDATCPISKETDFKKCAVKVVRA.

The tat-type signal signal peptide spans methionine 1–alanine 29. One can recognise a 4Fe-4S Mo/W bis-MGD-type domain in the interval valine 44–aspartate 100. 4 residues coordinate [4Fe-4S] cluster: cysteine 51, cysteine 54, cysteine 58, and cysteine 86. Residues lysine 88, glutamine 155, asparagine 180, cysteine 184, tryptophan 217 to methionine 224, serine 248 to histidine 252, and glutamine 267 to aspartate 269 contribute to the Mo-bis(molybdopterin guanine dinucleotide) site. The disordered stretch occupies residues aspartate 317–threonine 338. Mo-bis(molybdopterin guanine dinucleotide) is bound by residues methionine 388, glutamine 392, asparagine 498, serine 524–aspartate 525, lysine 547, aspartate 574, and threonine 741–threonine 750. Position 817 (phenylalanine 817) interacts with substrate. Positions 825 and 842 each coordinate Mo-bis(molybdopterin guanine dinucleotide).

The protein belongs to the prokaryotic molybdopterin-containing oxidoreductase family. NasA/NapA/NarB subfamily. In terms of assembly, component of the periplasmic nitrate reductase NapAB complex composed of NapA and NapB. [4Fe-4S] cluster serves as cofactor. It depends on Mo-bis(molybdopterin guanine dinucleotide) as a cofactor. In terms of processing, predicted to be exported by the Tat system. The position of the signal peptide cleavage has not been experimentally proven.

The protein resides in the periplasm. It catalyses the reaction 2 Fe(II)-[cytochrome] + nitrate + 2 H(+) = 2 Fe(III)-[cytochrome] + nitrite + H2O. Catalytic subunit of the periplasmic nitrate reductase complex NapAB. Receives electrons from NapB and catalyzes the reduction of nitrate to nitrite. This chain is Periplasmic nitrate reductase, found in Leptothrix cholodnii (strain ATCC 51168 / LMG 8142 / SP-6) (Leptothrix discophora (strain SP-6)).